We begin with the raw amino-acid sequence, 287 residues long: MSPSLVSDTQKHERGSHGVKIKHFSPYIAVCVTTFSLAFCCFMVHGAITRQPTHLLPFFFIQVFDLIICLIHILGFMSSTSDIRLVIHTKTGPIYIKSTGLTFIILSISRMMLAFKAYCLGMVWDCYKYLMLNRRGNLLDDWYSDQWGHLSTFWSLLRTGRNRGNNSIGNSGSPNEPNTRPRPDTITYDPANDLPKYEDILKIPANAYTPPPYYCSNTNGNVNTTTTDAVTTNTTITSATTVNATTTITTNANTNTSTTTSVISPLTTTNKDDTQINNASSNAHSSC.

The Extracellular portion of the chain corresponds to 1-27 (MSPSLVSDTQKHERGSHGVKIKHFSPY). The helical transmembrane segment at 28–48 (IAVCVTTFSLAFCCFMVHGAI) threads the bilayer. Topologically, residues 49-55 (TRQPTHL) are cytoplasmic. Residues 56 to 76 (LPFFFIQVFDLIICLIHILGF) form a helical membrane-spanning segment. Topologically, residues 77–91 (MSSTSDIRLVIHTKT) are extracellular. A helical transmembrane segment spans residues 92 to 114 (GPIYIKSTGLTFIILSISRMMLA). Residues 115–287 (FKAYCLGMVW…NASSNAHSSC (173 aa)) lie on the Cytoplasmic side of the membrane. Residues 165 to 190 (NNSIGNSGSPNEPNTRPRPDTITYDP) form a disordered region.

As to quaternary structure, interacts (via N-terminal extracellular domain) with human C2a.

Its subcellular location is the cell membrane. In terms of biological role, cell surface receptor that binds to human complement C2a protein. This results in inhibition of the classical and lectin pathways of complement activation, probably due to interference with binding of C2a to C4b and interference with cleavage by C1 or MASP2 such that C3 convertase cannot be formed. This infers resistance to complement-mediated cell lysis, allowing parasite survival and infection. The protein is Tetraspanning orphan receptor of Trypanosoma cruzi.